Consider the following 209-residue polypeptide: GTP-binding nuclear protein Ran1A (209 aa).

One can recognise a Small GTPase Ran-type domain in the interval 1–162; that stretch reads NFKLVIVGDG…LYLARKLAGD (162 aa). Residue 9–16 participates in GTP binding; sequence DGGTGKTT. The segment at 28–36 is switch-I; the sequence is KKYEPTIGV. Residues G59, 113 to 116, and 141 to 143 contribute to the GTP site; these read NKVD and SAK. The tract at residues 59-75 is switch-II; that stretch reads GQEKFGGLRDGYYIHGQ. A compositionally biased stretch (low complexity) spans 187–196; it reads QHEAELAQAA. The segment at 187-209 is disordered; that stretch reads QHEAELAQAASQPLPDDDDDAFD.

The protein belongs to the small GTPase superfamily. Ran family. In terms of assembly, found in a nuclear export complex with RanGTP, exportin and pre-miRNA.

The protein localises to the nucleus. In terms of biological role, GTP-binding protein involved in nucleocytoplasmic transport. Required for the import of protein into the nucleus and also for RNA export. Involved in chromatin condensation and control of cell cycle. In Lotus japonicus (Lotus corniculatus var. japonicus), this protein is GTP-binding nuclear protein Ran1A (RAN1A).